Here is a 229-residue protein sequence, read N- to C-terminus: 2,3-bisphosphoglycerate-dependent phosphoglycerate mutase (229 aa).

Substrate is bound by residues 7–14, 20–21, R59, 86–89, K97, 113–114, and 182–183; these read RHGQSEWN, TG, ERHY, RR, and GN. Residue H8 is the Tele-phosphohistidine intermediate of the active site. E86 functions as the Proton donor/acceptor in the catalytic mechanism.

It belongs to the phosphoglycerate mutase family. BPG-dependent PGAM subfamily.

The catalysed reaction is (2R)-2-phosphoglycerate = (2R)-3-phosphoglycerate. It functions in the pathway carbohydrate degradation; glycolysis; pyruvate from D-glyceraldehyde 3-phosphate: step 3/5. Catalyzes the interconversion of 2-phosphoglycerate and 3-phosphoglycerate. In Listeria monocytogenes serovar 1/2a (strain ATCC BAA-679 / EGD-e), this protein is 2,3-bisphosphoglycerate-dependent phosphoglycerate mutase.